A 152-amino-acid polypeptide reads, in one-letter code: uncharacterized protein (152 aa).

The Cytoplasmic portion of the chain corresponds to 1 to 5; the sequence is MWFPQ. The chain crosses the membrane as a helical span at residues 6-26; it reads IIAGMAAGGAASAMTPGKVLF. The Extracellular segment spans residues 27-38; the sequence is TNALGLGCSRSR. A helical membrane pass occupies residues 39–59; it reads GLFLEMFGTAVLCFTVLMTAV. Residues 60–65 lie on the Cytoplasmic side of the membrane; it reads EKRETN. Residues 66–86 traverse the membrane as a helical segment; sequence FMAALPIGISLFMAHMALTGY. The Extracellular portion of the chain corresponds to 87-110; it reads TGTGVNPARSLGAAVAARYFPHYH. The NPA motif lies at 92–94; the sequence is NPA. Residues 111-131 traverse the membrane as a helical segment; that stretch reads WIYWISPLLGAFLAWSVWQLL. The Cytoplasmic segment spans residues 132-152; it reads QILDYTTYVNAEKAAGQKKED.

Belongs to the MIP/aquaporin (TC 1.A.8) family.

Its subcellular location is the membrane. This is an uncharacterized protein from Saccharomyces cerevisiae (strain YJM789) (Baker's yeast).